Consider the following 345-residue polypeptide: Dihydroorotate dehydrogenase (quinone) (345 aa).

FMN-binding positions include 65 to 69 (AGLDK) and Thr89. Residue Lys69 participates in substrate binding. 114–118 (NRMGF) lines the substrate pocket. FMN is bound by residues Asn142 and Asn175. Residue Asn175 participates in substrate binding. Ser178 functions as the Nucleophile in the catalytic mechanism. Asn180 contributes to the substrate binding site. Residues Lys220 and Thr248 each contribute to the FMN site. A substrate-binding site is contributed by 249 to 250 (NT). FMN is bound by residues Gly271, Gly300, and 321–322 (YT).

It belongs to the dihydroorotate dehydrogenase family. Type 2 subfamily. Monomer. Requires FMN as cofactor.

The protein localises to the cell membrane. It carries out the reaction (S)-dihydroorotate + a quinone = orotate + a quinol. Its pathway is pyrimidine metabolism; UMP biosynthesis via de novo pathway; orotate from (S)-dihydroorotate (quinone route): step 1/1. In terms of biological role, catalyzes the conversion of dihydroorotate to orotate with quinone as electron acceptor. This chain is Dihydroorotate dehydrogenase (quinone), found in Burkholderia cenocepacia (strain HI2424).